The chain runs to 156 residues: Arginine repressor (156 aa).

This sequence belongs to the ArgR family.

The protein resides in the cytoplasm. The protein operates within amino-acid biosynthesis; L-arginine biosynthesis [regulation]. Functionally, regulates arginine biosynthesis genes. In Shigella boydii serotype 18 (strain CDC 3083-94 / BS512), this protein is Arginine repressor.